Consider the following 171-residue polypeptide: 3-hydroxydecanoyl-[acyl-carrier-protein] dehydratase (171 aa).

The active site involves H70.

It belongs to the thioester dehydratase family. FabA subfamily. In terms of assembly, homodimer.

Its subcellular location is the cytoplasm. The enzyme catalyses a (3R)-hydroxyacyl-[ACP] = a (2E)-enoyl-[ACP] + H2O. The catalysed reaction is (3R)-hydroxydecanoyl-[ACP] = (2E)-decenoyl-[ACP] + H2O. It carries out the reaction (2E)-decenoyl-[ACP] = (3Z)-decenoyl-[ACP]. Its pathway is lipid metabolism; fatty acid biosynthesis. Its function is as follows. Necessary for the introduction of cis unsaturation into fatty acids. Catalyzes the dehydration of (3R)-3-hydroxydecanoyl-ACP to E-(2)-decenoyl-ACP and then its isomerization to Z-(3)-decenoyl-ACP. Can catalyze the dehydratase reaction for beta-hydroxyacyl-ACPs with saturated chain lengths up to 16:0, being most active on intermediate chain length. This is 3-hydroxydecanoyl-[acyl-carrier-protein] dehydratase from Shewanella frigidimarina (strain NCIMB 400).